Reading from the N-terminus, the 122-residue chain is Large ribosomal subunit protein uL14 (122 aa).

It belongs to the universal ribosomal protein uL14 family. In terms of assembly, part of the 50S ribosomal subunit. Forms a cluster with proteins L3 and L19. In the 70S ribosome, L14 and L19 interact and together make contacts with the 16S rRNA in bridges B5 and B8.

In terms of biological role, binds to 23S rRNA. Forms part of two intersubunit bridges in the 70S ribosome. This is Large ribosomal subunit protein uL14 from Acaryochloris marina (strain MBIC 11017).